We begin with the raw amino-acid sequence, 469 residues long: MSQFLTEDFLLDTEFARRLYHDYAKDQPIFDYHCHLPPEQIAENYRFKNMYDIWLKGDHYKWRAMRTNGVAERLCTGDASDREKFDAWAATVPHTIGNPLYHWTHLELRRPFGITGKLLSPATSEEIWQRGNELLAQDPFSARGIMQQMNVKMVGTTDDPIDDLRHHKAIAADGSFNIKVLPSWRPDKAFNIEAAGFNDYMQRLEAAADTSISRFADLCVALNKRMDHFAAHGCKVSDHALDVVVYGEADETTLDAILARRLAGNQPSTEEIAQFKTAVLLFLSGEYHRREWVQQYHIGALRNNNSRMFNLVGPDIGFDSINDQPLAQPLSRLLDAQGLRNALPKTILYCLNPRDNEVIGTMVGNFQGEGEAGKMQFGSGWWFNDQKDGMQRQMTQLAQLGLLSRFVGMLTDSRSFLSYTRHEYFRRILCQMIGRWVADGEAPADIALLGAMVKNICFDNAQQYFAIEL.

It belongs to the metallo-dependent hydrolases superfamily. Uronate isomerase family.

It catalyses the reaction D-glucuronate = D-fructuronate. The enzyme catalyses aldehydo-D-galacturonate = keto-D-tagaturonate. The protein operates within carbohydrate metabolism; pentose and glucuronate interconversion. The protein is Uronate isomerase of Yersinia pseudotuberculosis serotype O:1b (strain IP 31758).